Here is a 460-residue protein sequence, read N- to C-terminus: Fumarate hydratase class II (460 aa).

Residues 95-97 (SGT), 126-129 (HPND), 136-138 (SSN), and Thr184 each bind substrate. The Proton donor/acceptor role is filled by His185. Ser315 is an active-site residue. Residues Ser316 and 321-323 (KIN) contribute to the substrate site.

This sequence belongs to the class-II fumarase/aspartase family. Fumarase subfamily. In terms of assembly, homotetramer.

It is found in the cytoplasm. The catalysed reaction is (S)-malate = fumarate + H2O. The protein operates within carbohydrate metabolism; tricarboxylic acid cycle; (S)-malate from fumarate: step 1/1. Its function is as follows. Involved in the TCA cycle. Catalyzes the stereospecific interconversion of fumarate to L-malate. In Chlamydia caviae (strain ATCC VR-813 / DSM 19441 / 03DC25 / GPIC) (Chlamydophila caviae), this protein is Fumarate hydratase class II.